Reading from the N-terminus, the 150-residue chain is UPF0178 protein Shewmr4_1560 (150 aa).

This sequence belongs to the UPF0178 family.

This chain is UPF0178 protein Shewmr4_1560, found in Shewanella sp. (strain MR-4).